Consider the following 244-residue polypeptide: DNA repair protein RecO (244 aa).

The protein belongs to the RecO family.

Its function is as follows. Involved in DNA repair and RecF pathway recombination. This Caldicellulosiruptor bescii (strain ATCC BAA-1888 / DSM 6725 / KCTC 15123 / Z-1320) (Anaerocellum thermophilum) protein is DNA repair protein RecO.